Here is a 167-residue protein sequence, read N- to C-terminus: Small ribosomal subunit protein uS9 (167 aa).

A disordered region spans residues 136–167 (KRAGFLTRDPRATERKKYGLKKARKAPQYSKR). Residues 143 to 152 (RDPRATERKK) show a composition bias toward basic and acidic residues. Positions 153-167 (YGLKKARKAPQYSKR) are enriched in basic residues.

Belongs to the universal ribosomal protein uS9 family.

In Nocardia farcinica (strain IFM 10152), this protein is Small ribosomal subunit protein uS9.